Reading from the N-terminus, the 284-residue chain is 4-hydroxybenzoate octaprenyltransferase (284 aa).

A run of 7 helical transmembrane segments spans residues 33–53 (VIAA…LGVF), 93–113 (IGLF…MNPL), 136–156 (YLPQ…AWAA), 159–179 (GELP…TIAY), 209–229 (LVIG…GQHY), 231–248 (LGQS…LFVY), and 264–284 (AFLN…IAFW).

It belongs to the UbiA prenyltransferase family. It depends on Mg(2+) as a cofactor.

The protein resides in the cell inner membrane. It carries out the reaction all-trans-octaprenyl diphosphate + 4-hydroxybenzoate = 4-hydroxy-3-(all-trans-octaprenyl)benzoate + diphosphate. The protein operates within cofactor biosynthesis; ubiquinone biosynthesis. In terms of biological role, catalyzes the prenylation of para-hydroxybenzoate (PHB) with an all-trans polyprenyl group. Mediates the second step in the final reaction sequence of ubiquinone-8 (UQ-8) biosynthesis, which is the condensation of the polyisoprenoid side chain with PHB, generating the first membrane-bound Q intermediate 3-octaprenyl-4-hydroxybenzoate. The sequence is that of 4-hydroxybenzoate octaprenyltransferase from Vibrio campbellii (strain ATCC BAA-1116).